The following is a 366-amino-acid chain: Aminomethyltransferase (366 aa).

This sequence belongs to the GcvT family. As to quaternary structure, the glycine cleavage system is composed of four proteins: P, T, L and H.

The enzyme catalyses N(6)-[(R)-S(8)-aminomethyldihydrolipoyl]-L-lysyl-[protein] + (6S)-5,6,7,8-tetrahydrofolate = N(6)-[(R)-dihydrolipoyl]-L-lysyl-[protein] + (6R)-5,10-methylene-5,6,7,8-tetrahydrofolate + NH4(+). The glycine cleavage system catalyzes the degradation of glycine. The chain is Aminomethyltransferase from Bacillus cereus (strain ATCC 10987 / NRS 248).